A 32-amino-acid polypeptide reads, in one-letter code: U13-ctenitoxin-Pn1a (32 aa).

3 disulfide bridges follow: Cys3/Cys17, Cys10/Cys21, and Cys16/Cys30.

In terms of tissue distribution, expressed by the venom gland.

Its subcellular location is the secreted. Functionally, acts as a neurotoxin. In Phoneutria nigriventer (Brazilian armed spider), this protein is U13-ctenitoxin-Pn1a.